The sequence spans 147 residues: UPF0306 protein YhbP (147 aa).

Belongs to the UPF0306 family.

The protein is UPF0306 protein YhbP of Escherichia coli O6:K15:H31 (strain 536 / UPEC).